Here is a 232-residue protein sequence, read N- to C-terminus: Ubiquinone biosynthesis O-methyltransferase (232 aa).

S-adenosyl-L-methionine is bound by residues arginine 36, glycine 55, aspartate 76, and leucine 120.

The protein belongs to the methyltransferase superfamily. UbiG/COQ3 family.

The catalysed reaction is a 3-demethylubiquinol + S-adenosyl-L-methionine = a ubiquinol + S-adenosyl-L-homocysteine + H(+). It catalyses the reaction a 3-(all-trans-polyprenyl)benzene-1,2-diol + S-adenosyl-L-methionine = a 2-methoxy-6-(all-trans-polyprenyl)phenol + S-adenosyl-L-homocysteine + H(+). Its pathway is cofactor biosynthesis; ubiquinone biosynthesis. Its function is as follows. O-methyltransferase that catalyzes the 2 O-methylation steps in the ubiquinone biosynthetic pathway. This Pseudomonas aeruginosa (strain UCBPP-PA14) protein is Ubiquinone biosynthesis O-methyltransferase.